A 189-amino-acid polypeptide reads, in one-letter code: Glucose-6-phosphate isomerase (189 aa).

4 residues coordinate Fe cation: His-88, His-90, Glu-97, and His-136.

Belongs to the archaeal-type GPI family. Homodimer.

It is found in the cytoplasm. The catalysed reaction is alpha-D-glucose 6-phosphate = beta-D-fructose 6-phosphate. It functions in the pathway carbohydrate degradation; glycolysis; D-glyceraldehyde 3-phosphate and glycerone phosphate from D-glucose: step 2/4. The sequence is that of Glucose-6-phosphate isomerase from Thermococcus onnurineus (strain NA1).